A 688-amino-acid polypeptide reads, in one-letter code: Zinc finger and BTB domain-containing protein 48 (688 aa).

One can recognise a BTB domain in the interval 26–89 (CDATLDVGGL…FYTGHLALTS (64 aa)). A disordered region spans residues 119-140 (SVGQAAGGQSGLGPPASQNVNS). A Glycyl lysine isopeptide (Lys-Gly) (interchain with G-Cter in SUMO2) cross-link involves residue Lys143. The disordered stretch occupies residues 161-192 (PRDQEPRGSHSPQRPQLHSPAQSEGPSSLCGK). 3 positions are modified to phosphoserine: Ser169, Ser171, and Ser179. Polar residues predominate over residues 170–186 (HSPQRPQLHSPAQSEGP). Lys263 is covalently cross-linked (Glycyl lysine isopeptide (Lys-Gly) (interchain with G-Cter in SUMO2)). Residues 291-313 (VECPTCHKKFLSKYYLKVHNRKH) form a C2H2-type 1 zinc finger. Positions 293, 296, 309, 313, 321, 324, 337, 342, 352, 355, 368, 372, 380, 383, 396, and 401 each coordinate Zn(2+). The CCHC-type zinc finger occupies 319-344 (FECPKCGKCYFRKENLLEHEARNCMN). 9 C2H2-type zinc fingers span residues 350–372 (FTCSVCQETFRRRMELRVHMVSH), 378–401 (YKCSSCSQQFMQKKDLQSHMIKLH), 407–430 (HACPTCAKCFLSRTELQLHEAFKH), 436–459 (FVCEECGHRASSRNGLQMHIKAKH), 465–487 (HVCEFCSHAFTQKANLNMHLRTH), 493–515 (FQCHLCGKTFRTQASLDKHNRTH), 521–544 (FSCEFCEQRFTEKGPLLRHVASRH), 550–572 (HFCQICGKTFKAVEQLRVHVRRH), and 578–600 (FECTECGYKFTRQAHLRRHMEIH). The Zn(2+) site is built by Cys552, Cys555, His568, Cys580, Cys583, His596, and His600.

Belongs to the krueppel C2H2-type zinc-finger protein family. In terms of assembly, interacts with EP300. In terms of tissue distribution, detected in adrenal gland and neuroblastoma.

Its subcellular location is the nucleus. The protein localises to the chromosome. It localises to the telomere. Plays a critical role in transcriptional regulation and chromatin remodeling. Acts as a regulator of telomere length. Directly binds the telomeric double-stranded 5'-TTAGGG-3' repeat. Preferentially binds to telomeres that have a low concentration of shelterin complex and acts as a regulator of telomere length by initiating telomere trimming, a process that prevents the accumulation of aberrantly long telomeres. Also acts as a transcription regulator that binds to promoter regions. Regulates expression of a small subset of genes, including MTFP1. Acts as a negative regulator of cell proliferation by specifically activating expression of ARF, a tumor suppressor isoform of CDKN2A. Acts as a transcription regulator of CIITA, the major factor regulating MHC class II gene expression. In addition, regulates cellular m6A/m6Am methylation on RNA by facilitating the recruitment of the RNA demethylase, FTO, to target mRNAs. This chain is Zinc finger and BTB domain-containing protein 48, found in Homo sapiens (Human).